Reading from the N-terminus, the 345-residue chain is V-type proton ATPase subunit d (345 aa).

An N-acetylmethionine modification is found at methionine 1.

Belongs to the V-ATPase V0D/AC39 subunit family. As to quaternary structure, V-ATPase is a heteromultimeric enzyme composed of a peripheral catalytic V1 complex (components A to H) attached to an integral membrane V0 proton pore complex (components: a, c, c', c'', d, e, f and VOA1).

It is found in the vacuole membrane. Its function is as follows. Subunit of the V0 complex of vacuolar(H+)-ATPase (V-ATPase), a multisubunit enzyme composed of a peripheral complex (V1) that hydrolyzes ATP and a membrane integral complex (V0) that translocates protons. V-ATPase is responsible for acidifying and maintaining the pH of intracellular compartments. This subunit is a non-integral membrane component of the membrane pore domain and is required for proper assembly of the V0 sector. Might be involved in the regulated assembly of V1 subunits onto the membrane sector or alternatively may prevent the passage of protons through V0 pores. The sequence is that of V-type proton ATPase subunit d from Saccharomyces cerevisiae (strain ATCC 204508 / S288c) (Baker's yeast).